Here is a 291-residue protein sequence, read N- to C-terminus: Phosphate import ATP-binding protein PstB (291 aa).

The 242-residue stretch at 45-286 folds into the ABC transporter domain; the sequence is YSTQNLDLWY…PADKQTEDYI (242 aa). Residue 77–84 participates in ATP binding; it reads GPSGCGKS.

Belongs to the ABC transporter superfamily. Phosphate importer (TC 3.A.1.7) family. As to quaternary structure, the complex is composed of two ATP-binding proteins (PstB), two transmembrane proteins (PstC and PstA) and a solute-binding protein (PstS).

The protein localises to the cell membrane. The enzyme catalyses phosphate(out) + ATP + H2O = ADP + 2 phosphate(in) + H(+). Its function is as follows. Part of the ABC transporter complex PstSACB involved in phosphate import. Responsible for energy coupling to the transport system. In Staphylococcus epidermidis (strain ATCC 12228 / FDA PCI 1200), this protein is Phosphate import ATP-binding protein PstB.